The following is a 162-amino-acid chain: CASP-like protein BLE3 (162 aa).

Residues 1–7 are Cytoplasmic-facing; that stretch reads MAKVHRL. A helical membrane pass occupies residues 8 to 28; the sequence is MNAVLRLAAAAAAATAAVVMV. The Extracellular portion of the chain corresponds to 29 to 50; that stretch reads TSRETTSFFGIQMEAKYSYTPS. A helical membrane pass occupies residues 51-71; it reads FIFFVVAYAVAAAYSLLVLAV. At 72–85 the chain is on the cytoplasmic side; that stretch reads PAGSALSRLALTTD. A helical transmembrane segment spans residues 86 to 106; it reads VVLGMVLAGAVASAGAISDIA. Topologically, residues 107-128 are extracellular; sequence KNGNSHAGWLPVCGQIHAYCNH. A helical membrane pass occupies residues 129–149; it reads VMAALIAGFVALAVHFVVVMY. Residues 150–162 lie on the Cytoplasmic side of the membrane; that stretch reads SLHIVTDVICPCH.

It belongs to the Casparian strip membrane proteins (CASP) family. Homodimer and heterodimers.

The protein localises to the cell membrane. Functionally, involved in cell elongation in rice through dual regulation by brassinolide and auxin. The polypeptide is CASP-like protein BLE3 (BLE3) (Oryza sativa subsp. indica (Rice)).